The chain runs to 363 residues: Cobalt-precorrin-5B C(1)-methyltransferase (363 aa).

The protein belongs to the CbiD family.

The enzyme catalyses Co-precorrin-5B + S-adenosyl-L-methionine = Co-precorrin-6A + S-adenosyl-L-homocysteine. It participates in cofactor biosynthesis; adenosylcobalamin biosynthesis; cob(II)yrinate a,c-diamide from sirohydrochlorin (anaerobic route): step 6/10. Functionally, catalyzes the methylation of C-1 in cobalt-precorrin-5B to form cobalt-precorrin-6A. This Burkholderia pseudomallei (strain K96243) protein is Cobalt-precorrin-5B C(1)-methyltransferase.